Consider the following 211-residue polypeptide: Probable chemoreceptor glutamine deamidase CheD (211 aa).

Belongs to the CheD family.

The catalysed reaction is L-glutaminyl-[protein] + H2O = L-glutamyl-[protein] + NH4(+). In terms of biological role, probably deamidates glutamine residues to glutamate on methyl-accepting chemotaxis receptors (MCPs), playing an important role in chemotaxis. This is Probable chemoreceptor glutamine deamidase CheD from Hahella chejuensis (strain KCTC 2396).